A 512-amino-acid chain; its full sequence is Maturase K (512 aa).

It belongs to the intron maturase 2 family. MatK subfamily.

It localises to the plastid. Its subcellular location is the chloroplast. Usually encoded in the trnK tRNA gene intron. Probably assists in splicing its own and other chloroplast group II introns. This chain is Maturase K, found in Amorphophallus abyssinicus (Black arum).